We begin with the raw amino-acid sequence, 218 residues long: Large ribosomal subunit protein eL13 (218 aa).

A disordered region spans residues 196 to 218 (AKRAKEAAESEDAAKGDPKKAKK). The segment covering 199-218 (AKEAAESEDAAKGDPKKAKK) has biased composition (basic and acidic residues).

Belongs to the eukaryotic ribosomal protein eL13 family. Component of the 60S large ribosomal subunit (LSU).

It localises to the cytoplasm. Its function is as follows. Component of the ribosome, a large ribonucleoprotein complex responsible for the synthesis of proteins in the cell. The small ribosomal subunit (SSU) binds messenger RNAs (mRNAs) and translates the encoded message by selecting cognate aminoacyl-transfer RNA (tRNA) molecules. The large subunit (LSU) contains the ribosomal catalytic site termed the peptidyl transferase center (PTC), which catalyzes the formation of peptide bonds, thereby polymerizing the amino acids delivered by tRNAs into a polypeptide chain. The nascent polypeptides leave the ribosome through a tunnel in the LSU and interact with protein factors that function in enzymatic processing, targeting, and the membrane insertion of nascent chains at the exit of the ribosomal tunnel. As part of the LSU, it is probably required for its formation and the maturation of rRNAs. The protein is Large ribosomal subunit protein eL13 (RpL13) of Drosophila melanogaster (Fruit fly).